We begin with the raw amino-acid sequence, 224 residues long: N-(5'-phosphoribosyl)anthranilate isomerase (224 aa).

Belongs to the TrpF family.

The catalysed reaction is N-(5-phospho-beta-D-ribosyl)anthranilate = 1-(2-carboxyphenylamino)-1-deoxy-D-ribulose 5-phosphate. The protein operates within amino-acid biosynthesis; L-tryptophan biosynthesis; L-tryptophan from chorismate: step 3/5. This chain is N-(5'-phosphoribosyl)anthranilate isomerase, found in Sinorhizobium fredii (strain NBRC 101917 / NGR234).